Here is a 449-residue protein sequence, read N- to C-terminus: tRNA modification GTPase MnmE (449 aa).

Positions 24, 85, and 124 each coordinate (6S)-5-formyl-5,6,7,8-tetrahydrofolate. The region spanning 220 to 369 (GIRTAIAGPP…LEEAIIQAFS (150 aa)) is the TrmE-type G domain. Asparagine 230 contacts K(+). GTP-binding positions include 230 to 235 (NVGKSS), 249 to 255 (SNIAGTT), and 274 to 277 (DTAG). Serine 234 contacts Mg(2+). K(+) contacts are provided by serine 249, isoleucine 251, and threonine 254. Threonine 255 is a binding site for Mg(2+). A (6S)-5-formyl-5,6,7,8-tetrahydrofolate-binding site is contributed by lysine 449.

This sequence belongs to the TRAFAC class TrmE-Era-EngA-EngB-Septin-like GTPase superfamily. TrmE GTPase family. As to quaternary structure, homodimer. Heterotetramer of two MnmE and two MnmG subunits. K(+) serves as cofactor.

The protein resides in the cytoplasm. Functionally, exhibits a very high intrinsic GTPase hydrolysis rate. Involved in the addition of a carboxymethylaminomethyl (cmnm) group at the wobble position (U34) of certain tRNAs, forming tRNA-cmnm(5)s(2)U34. The sequence is that of tRNA modification GTPase MnmE from Akkermansia muciniphila (strain ATCC BAA-835 / DSM 22959 / JCM 33894 / BCRC 81048 / CCUG 64013 / CIP 107961 / Muc).